The sequence spans 152 residues: D-aminoacyl-tRNA deacylase (152 aa).

Positions 137–138 match the Gly-cisPro motif, important for rejection of L-amino acids motif; the sequence is GP.

This sequence belongs to the DTD family. Homodimer.

Its subcellular location is the cytoplasm. The catalysed reaction is glycyl-tRNA(Ala) + H2O = tRNA(Ala) + glycine + H(+). It carries out the reaction a D-aminoacyl-tRNA + H2O = a tRNA + a D-alpha-amino acid + H(+). Functionally, an aminoacyl-tRNA editing enzyme that deacylates mischarged D-aminoacyl-tRNAs. Also deacylates mischarged glycyl-tRNA(Ala), protecting cells against glycine mischarging by AlaRS. Acts via tRNA-based rather than protein-based catalysis; rejects L-amino acids rather than detecting D-amino acids in the active site. By recycling D-aminoacyl-tRNA to D-amino acids and free tRNA molecules, this enzyme counteracts the toxicity associated with the formation of D-aminoacyl-tRNA entities in vivo and helps enforce protein L-homochirality. This Aromatoleum aromaticum (strain DSM 19018 / LMG 30748 / EbN1) (Azoarcus sp. (strain EbN1)) protein is D-aminoacyl-tRNA deacylase.